Reading from the N-terminus, the 324-residue chain is Zinc transporter ZIP1 (324 aa).

Residues 1–30 lie on the Extracellular side of the membrane; it reads MGPWGEPELLVWRPEAVASEPPVPVGLEVK. Residues 31-51 form a helical membrane-spanning segment; that stretch reads LGALVLLLVLTLLCSLVPICV. The Cytoplasmic segment spans residues 52 to 68; it reads LRRPGANHEGSASRQKA. A helical transmembrane segment spans residues 69–89; it reads LSLVSCFAGGVFLATCLLDLL. The Extracellular portion of the chain corresponds to 90–104; sequence PDYLAAIDEALAALH. The helical transmembrane segment at 105-125 threads the bilayer; that stretch reads VTLQFPLQEFILAMGFFLVLV. Over 126 to 179 the chain is Cytoplasmic; the sequence is MEQITLAYKEQSGPSPLEETRALLGTVNGGPQHWHDGPGVPQASGAPATPSALR. Residues 180–200 traverse the membrane as a helical segment; it reads ACVLVFSLALHSVFEGLAVGL. Residues 201–206 are Extracellular-facing; it reads QRDRAR. The helical transmembrane segment at 207-227 threads the bilayer; sequence AMELCLALLLHKGILAVSLSL. The Cytoplasmic portion of the chain corresponds to 228–237; the sequence is RLLQSHLRAQ. The helical transmembrane segment at 238–258 threads the bilayer; sequence VVAGCGILFSCMTPLGIGLGA. At 259-272 the chain is on the extracellular side; it reads ALAESAGPLHQLAQ. Residues 273–293 traverse the membrane as a helical segment; that stretch reads SVLEGMAAGTFLYITFLEILP. The Cytoplasmic segment spans residues 294-303; the sequence is QELASSEQRI. Residues 304–324 traverse the membrane as a helical segment; it reads LKVILLLAGFALLTGLLFIQI.

The protein belongs to the ZIP transporter (TC 2.A.5) family. In terms of tissue distribution, ubiquitous. Expressed in most adult and fetal tissues including the epidermis.

It localises to the cell membrane. The protein resides in the endoplasmic reticulum membrane. The enzyme catalyses Zn(2+)(in) = Zn(2+)(out). Its activity is regulated as follows. Inhibited by Ni(2+) ions. Fe(2+) ions do not inhibit zinc uptake. Functionally, transporter for the divalent cation Zn(2+). Mediates the influx of Zn(2+) into cells from extracellular space. Functions as the major importer of zinc from circulating blood plasma into prostate cells. This is Zinc transporter ZIP1 from Homo sapiens (Human).